We begin with the raw amino-acid sequence, 229 residues long: Potassium/proton antiporter CemA (229 aa).

A run of 3 helical transmembrane segments spans residues alanine 6–cysteine 26, isoleucine 107–glycine 127, and isoleucine 189–isoleucine 209.

This sequence belongs to the CemA family.

It localises to the plastid. It is found in the chloroplast inner membrane. It catalyses the reaction K(+)(in) + H(+)(out) = K(+)(out) + H(+)(in). Its function is as follows. Contributes to K(+)/H(+) antiport activity by supporting proton efflux to control proton extrusion and homeostasis in chloroplasts in a light-dependent manner to modulate photosynthesis. Prevents excessive induction of non-photochemical quenching (NPQ) under continuous-light conditions. Indirectly promotes efficient inorganic carbon uptake into chloroplasts. This Arabis hirsuta (Hairy rock-cress) protein is Potassium/proton antiporter CemA.